The primary structure comprises 439 residues: Ribosomal protein uS12 methylthiotransferase RimO (439 aa).

The MTTase N-terminal domain occupies 5-115; the sequence is PKIGFVSLGC…LIEAVHTHAP (111 aa). [4Fe-4S] cluster contacts are provided by C14, C50, C79, C146, C150, and C153. The 238-residue stretch at 132-369 folds into the Radical SAM core domain; sequence LTPRHYSYLK…MGLQAQISTD (238 aa). One can recognise a TRAM domain in the interval 372 to 439; sequence QRFVGTEQQV…ESTEYDLIAD (68 aa).

The protein belongs to the methylthiotransferase family. RimO subfamily. The cofactor is [4Fe-4S] cluster.

The protein resides in the cytoplasm. It carries out the reaction L-aspartate(89)-[ribosomal protein uS12]-hydrogen + (sulfur carrier)-SH + AH2 + 2 S-adenosyl-L-methionine = 3-methylsulfanyl-L-aspartate(89)-[ribosomal protein uS12]-hydrogen + (sulfur carrier)-H + 5'-deoxyadenosine + L-methionine + A + S-adenosyl-L-homocysteine + 2 H(+). Functionally, catalyzes the methylthiolation of an aspartic acid residue of ribosomal protein uS12. The sequence is that of Ribosomal protein uS12 methylthiotransferase RimO from Francisella tularensis subsp. novicida (strain U112).